Here is a 504-residue protein sequence, read N- to C-terminus: Maturase K (504 aa).

It belongs to the intron maturase 2 family. MatK subfamily.

The protein resides in the plastid. It localises to the chloroplast. In terms of biological role, usually encoded in the trnK tRNA gene intron. Probably assists in splicing its own and other chloroplast group II introns. In Fagus hayatae (Formosan elm), this protein is Maturase K.